The sequence spans 141 residues: Putative pre-16S rRNA nuclease (141 aa).

It belongs to the YqgF nuclease family.

It localises to the cytoplasm. Could be a nuclease involved in processing of the 5'-end of pre-16S rRNA. This chain is Putative pre-16S rRNA nuclease, found in Clostridioides difficile (strain 630) (Peptoclostridium difficile).